We begin with the raw amino-acid sequence, 776 residues long: Intermediate filament protein ifp-1 (776 aa).

Residues 1–23 are head; sequence MDSANARDCLLHLARAKLSERQD. Residues 20–371 form the IF rod domain; it reads ERQDLVQLND…ELLDRSGDPR (352 aa). The coil 1A stretch occupies residues 24 to 55; sequence LVQLNDQFVDIIEHVHYMEAEHTALEHDYNLL. Positions 56-69 are linker 1; it reads KSGVQSDSSGINEI. The coil 1B stretch occupies residues 70 to 207; the sequence is YNVEIRTVRS…EDNKKIIMNE (138 aa). Residues 208 to 224 form a linker 12 region; it reads HKYFVRDRNADRHVFRD. The coil 2 stretch occupies residues 225–620; it reads QLRKAIADIR…QRGPHHSSYH (396 aa). Disordered regions lie at residues 453–473 and 518–544; these read ASPI…DSRS and NTTQ…SERR. A compositionally biased stretch (polar residues) spans 518 to 536; the sequence is NTTQINNPYASRTPTSSVN. The segment at 621 to 768 is tail; it reads AATGSVSNSI…WFVYTSNTEI (148 aa). The LTD domain occupies 653 to 764; sequence NFQRFTRWYK…EVKSWFVYTS (112 aa).

This sequence belongs to the intermediate filament family.

The protein localises to the cytoplasm. Its function is as follows. Cytoplasmic intermediate filaments provide mechanical strength to cells. Not essential protein. This is Intermediate filament protein ifp-1 (ifp-1) from Caenorhabditis elegans.